Reading from the N-terminus, the 410-residue chain is Metal tolerance protein 3 (410 aa).

The disordered stretch occupies residues 1–58 (MDGDDRRTPLLGGEGGSTRPPSLRRRDSARSLRSTFLSRLPDKVRGGGDPERPAADVD). At 1–114 (MDGDDRRTPL…EDKEQKQSES (114 aa)) the chain is on the cytoplasmic side. Positions 40–58 (LPDKVRGGGDPERPAADVD) are enriched in basic and acidic residues. Residues 115 to 135 (AMKISNYANIILLVFKVYATI) form a helical membrane-spanning segment. The Vacuolar segment spans residues 136–140 (KTGSM). Residues 141–161 (AIAASTLDSLLDFLAGGILYF) traverse the membrane as a helical segment. The Cytoplasmic segment spans residues 162–184 (THLTMKSVNIYKYPIGKLRVQPV). A helical membrane pass occupies residues 185–205 (GIIVFAAIMATLGFQVLIQAI). At 206–221 (EQLVENKAGEKMTPEQ) the chain is on the vacuolar side. The chain crosses the membrane as a helical span at residues 222–242 (LIWLYSIMLSATVVKLALYIY). At 243 to 258 (CRSSGNSIVQAYAKDH) the chain is on the cytoplasmic side. Residues 259 to 275 (YFDVVTNVVGLVAAVLG) form a helical membrane-spanning segment. The Vacuolar segment spans residues 276 to 284 (DKFFWWIDP). Residues 285-303 (VGAVLLAVYTIVNWSGTVY) form a helical membrane-spanning segment. Residues 304–410 (ENAVTLVGQC…VRSRLPSTEP (107 aa)) lie on the Cytoplasmic side of the membrane.

It belongs to the cation diffusion facilitator (CDF) transporter (TC 2.A.4) family. SLC30A subfamily.

The protein resides in the vacuole membrane. Its function is as follows. Involved in sequestration of excess metal in the cytoplasm into vacuoles to maintain metal homeostasis. The sequence is that of Metal tolerance protein 3 (MTP3) from Oryza sativa subsp. japonica (Rice).